Consider the following 360-residue polypeptide: DNA replication and repair protein RecF (360 aa).

Position 30–37 (30–37 (GHNGSGKT)) interacts with ATP.

Belongs to the RecF family.

Its subcellular location is the cytoplasm. Functionally, the RecF protein is involved in DNA metabolism; it is required for DNA replication and normal SOS inducibility. RecF binds preferentially to single-stranded, linear DNA. It also seems to bind ATP. This is DNA replication and repair protein RecF from Actinobacillus pleuropneumoniae serotype 5b (strain L20).